The following is a 315-amino-acid chain: Methionyl-tRNA formyltransferase (315 aa).

113–116 (SLLP) is a (6S)-5,6,7,8-tetrahydrofolate binding site.

It belongs to the Fmt family.

The enzyme catalyses L-methionyl-tRNA(fMet) + (6R)-10-formyltetrahydrofolate = N-formyl-L-methionyl-tRNA(fMet) + (6S)-5,6,7,8-tetrahydrofolate + H(+). In terms of biological role, attaches a formyl group to the free amino group of methionyl-tRNA(fMet). The formyl group appears to play a dual role in the initiator identity of N-formylmethionyl-tRNA by promoting its recognition by IF2 and preventing the misappropriation of this tRNA by the elongation apparatus. This chain is Methionyl-tRNA formyltransferase, found in Salmonella gallinarum (strain 287/91 / NCTC 13346).